We begin with the raw amino-acid sequence, 373 residues long: sn-glycerol-3-phosphate import ATP-binding protein UgpC (373 aa).

One can recognise an ABC transporter domain in the interval leucine 4–isoleucine 235. Glycine 37–serine 44 lines the ATP pocket.

This sequence belongs to the ABC transporter superfamily. sn-glycerol-3-phosphate importer (TC 3.A.1.1.3) family. In terms of assembly, the complex is composed of two ATP-binding proteins (UgpC), two transmembrane proteins (UgpA and UgpE) and a solute-binding protein (UgpB).

The protein localises to the cell inner membrane. It catalyses the reaction sn-glycerol 3-phosphate(out) + ATP + H2O = sn-glycerol 3-phosphate(in) + ADP + phosphate + H(+). Functionally, part of the ABC transporter complex UgpBAEC involved in sn-glycerol-3-phosphate (G3P) import. Responsible for energy coupling to the transport system. This chain is sn-glycerol-3-phosphate import ATP-binding protein UgpC, found in Psychromonas ingrahamii (strain DSM 17664 / CCUG 51855 / 37).